We begin with the raw amino-acid sequence, 1001 residues long: Ulvan lyase, long isoform (1001 aa).

The N-terminal stretch at 1-21 (MNGLKMLLFSTTLLTAFTLHA) is a signal peptide. 126–127 (SH) is a binding site for substrate. The Proton donor/acceptor role is filled by His127. Residues Asp189, Asp199, and Lys201 each coordinate Ca(2+). Residues Tyr280 and Arg297 each contribute to the substrate site. 3 residues coordinate Ca(2+): Asp300, Asp303, and Tyr305. Tyr361 is a binding site for substrate.

It belongs to the polysaccharide lyase 24 family.

Its function is as follows. Ulvan lyase involved in ulvan degradation. Ulvan is the main polysaccharide component of the Ulvales (green seaweed) cell wall. It is composed of disaccharide building blocks comprising 3-sulfated rhamnose (Rha3S) linked to D-glucuronic acid (GlcA), L-iduronic acid (IduA), or D-xylose (Xyl). Ulvan lyase catalyzes preferentially the endolytic cleavage of the glycosidic bond between Rha3S and the uronic acid GlcA, but not IduA, producing oligosaccharides that have unsaturated 4-deoxy-L-threo-hex-4-enopyranosiduronic acid (deltaUA) at the non-reducing end. The most abundant end products in the degradation of the ulvan polysaccharide were deltaUA-Rha3S disaccharides and deltaUA-Rha3S-IduA-Rha3S and deltaUA-Rha3S-Xyl-Rha3S tetrasaccharides. In Pseudoalteromonas sp. (strain PLSV), this protein is Ulvan lyase, long isoform.